We begin with the raw amino-acid sequence, 49 residues long: Large ribosomal subunit protein bL33B (49 aa).

It belongs to the bacterial ribosomal protein bL33 family.

The polypeptide is Large ribosomal subunit protein bL33B (Staphylococcus saprophyticus subsp. saprophyticus (strain ATCC 15305 / DSM 20229 / NCIMB 8711 / NCTC 7292 / S-41)).